Reading from the N-terminus, the 546-residue chain is MPLSLLLACLFTTVTLQSPVVLDPCSAYISLNEPWRNTDHQFDESQSQPLCDNHMDGEWYRFTGMAGDAMPTFCIPENHCGTHAPVWLNGSHPLEGDGIVQRQACASFKGNCCLWNTTVEVKACPGGYYVYRLAKPSVCFHIYCGHFYDICDEDCHGSCLDTTECACSPGTSLGPDGQTCFDENECEHNNGGCSEICVNLKNSHRCACGVGRVLRSDGKTCEDIEGCHSNNGGCSHSCLGSEKGYQCECPRGLVLSEDNHTCQVPVLCKSSAIEVSVPRELVGGLELFLTNTSCRGVSNGTHVNIIFSLKTCGTVVDVVNDKIVASNLVTGLPKQTPGSSGDIIIRTSKLLIPVTCEFPRLYTISEGYVPNLRNAPLEIRSRNHGIFPFTLEIFKDHEFEEPYRETLPTLKLRDSLYFGIEPLVHVSGLESLVESCFATPTAKVDEILKYYLIRDGCVSDDSVKQYSSRDHLAKHFQVPVFKFVGKDHKEVFLHCRVLVCGVLDERSRCAQGCHRRVRREAGEDEDSAGLQSQTLTGGPISIDWEE.

An N-terminal signal peptide occupies residues 1-16 (MPLSLLLACLFTTVTL). N-linked (GlcNAc...) asparagine glycans are attached at residues Asn-89 and Asn-116. The EGF-like; calcium-binding domain occupies 182-222 (DENECEHNNGGCSEICVNLKNSHRCACGVGRVLRSDGKTCE). 3 cysteine pairs are disulfide-bonded: Cys-186–Cys-197, Cys-193–Cys-206, and Cys-208–Cys-221. Residues 261–516 (TCQVPVLCKS…SRCAQGCHRR (256 aa)) enclose the ZP domain. Residue Asn-299 is glycosylated (N-linked (GlcNAc...) asparagine). A disordered region spans residues 524–546 (DEDSAGLQSQTLTGGPISIDWEE).

Its subcellular location is the nucleus envelope. Functionally, may be involved in hepatocellular function and development. In Rattus norvegicus (Rat), this protein is Oncoprotein-induced transcript 3 protein (Oit3).